Reading from the N-terminus, the 314-residue chain is Olfactory receptor 1Q1 (314 aa).

At 1-25 (MDNSNWTSVSHFVLLGISTHPEEQI) the chain is on the extracellular side. An N-linked (GlcNAc...) asparagine glycan is attached at Asn-5. A helical transmembrane segment spans residues 26 to 49 (PLFLVFSLMYAINISGNLAIITLI). Topologically, residues 50-57 (LSAPRLHI) are cytoplasmic. The helical transmembrane segment at 58-79 (PMYIFLSNLALTDICFTSTTVP) threads the bilayer. The Extracellular portion of the chain corresponds to 80–100 (KMLQIIFSPTKVISYTGCLAQ). Cys-97 and Cys-189 are oxidised to a cystine. Residues 101–120 (TYFFICFAVMENFILAVMAY) form a helical membrane-spanning segment. Topologically, residues 121 to 139 (DRYIAICHPFHYTMILTRM) are cytoplasmic. A helical transmembrane segment spans residues 140–158 (LCVKMVVMCHALSHLHAML). Over 159–195 (HTFLIGQLIFCADNRIPHFFCDLYALMKISCTSTYLN) the chain is Extracellular. Residues 196 to 219 (TLMIHTEGAVVISGALAFITASYA) traverse the membrane as a helical segment. Over 220-236 (CIILVVLRIPSAKGRWK) the chain is Cytoplasmic. Residues 237-259 (TFSTCGSHLTVVAIFYGTLSWVY) traverse the membrane as a helical segment. At 260-272 (FRPLSSYSVTKGR) the chain is on the extracellular side. Residues 273 to 292 (IITVVYTVVTPMLNPFIYSL) form a helical membrane-spanning segment. Topologically, residues 293–314 (RNGDVKGGFMKWMSRMQTFFFR) are cytoplasmic.

The protein belongs to the G-protein coupled receptor 1 family.

The protein localises to the cell membrane. Its function is as follows. Odorant receptor. The protein is Olfactory receptor 1Q1 (OR1Q1) of Homo sapiens (Human).